The chain runs to 98 residues: NADH-ubiquinone oxidoreductase chain 4L (98 aa).

3 helical membrane-spanning segments follow: residues 1–21 (MSSY…GILL), 24–44 (LHLL…FIWI), and 61–81 (LILL…MVAL).

Belongs to the complex I subunit 4L family.

It localises to the mitochondrion membrane. The catalysed reaction is a ubiquinone + NADH + 5 H(+)(in) = a ubiquinol + NAD(+) + 4 H(+)(out). Functionally, core subunit of the mitochondrial membrane respiratory chain NADH dehydrogenase (Complex I) that is believed to belong to the minimal assembly required for catalysis. Complex I functions in the transfer of electrons from NADH to the respiratory chain. The immediate electron acceptor for the enzyme is believed to be ubiquinone. The polypeptide is NADH-ubiquinone oxidoreductase chain 4L (ND4L) (Pisaster ochraceus (Ochre sea star)).